Reading from the N-terminus, the 577-residue chain is Proton channel OTOP3 (577 aa).

The tract at residues 1–46 (MASQTSAPAEPAPMPSPEAKTTEGASSYDQADMETKHAGSPCPPKQ) is disordered. Topologically, residues 1 to 69 (MASQTSAPAE…RDRQAQKAGQ (69 aa)) are cytoplasmic. Residues 70-90 (LFSGLLALNVVFLGGAFICSM) form a helical membrane-spanning segment. Over 91-100 (IFNKVSVTLG) the chain is Extracellular. A helical membrane pass occupies residues 101–124 (DVWILLAALKVLSLLWLLYYTVGT). The Cytoplasmic portion of the chain corresponds to 125-140 (TRKPHAVLYRDPHAGP). A helical membrane pass occupies residues 141-162 (IWVRGSLVLFGSCTVCLNIFRM). The Extracellular portion of the chain corresponds to 163-174 (GYDVSHIHCKSE). The chain crosses the membrane as a helical span at residues 175–198 (VELIFPAIEIVFMIIQTWVLWRHC). Residues 199–206 (KDCVQVQT) are Cytoplasmic-facing. A helical transmembrane segment spans residues 207–229 (NFTRCGLMLTLATNLLMWVLAVT). Topologically, residues 230 to 276 (NDSMHREIEAELDALMEKFSGNGTNTCMCLNTTVCEVFRKGYLMLYP) are extracellular. Residues 277–293 (FSTEYCLICCAVLFVMW) form a helical membrane-spanning segment. Over 294-319 (KNVSRSLAAHTGAHPNRSPFRLHGTI) the chain is Cytoplasmic. A helical transmembrane segment spans residues 320 to 339 (FGPLLGLLALVAGVCVFVLF). Residues 340 to 353 (QIEASGPDIARQYF) are Extracellular-facing. The helical transmembrane segment at 354–376 (TLYYAFYVAVLPTMSLACLAGTA) threads the bilayer. At 377-394 (IHGLEERELDTLKNPTRS) the chain is on the cytoplasmic side. A helical transmembrane segment spans residues 395 to 416 (LDVVLLMGAALGQMGIAYFSIV). Residues 417 to 427 (AIVATQPHELL) are Extracellular-facing. A helical membrane pass occupies residues 428–450 (NQLILAYSLLLILQHITQNLFII). Residues 451–510 (EGLHRRPLWEPAVSGVMEKQDVELPRRGSLRELGQDLRRASRAYIHSFSHLNWKRRMLKE) are Cytoplasmic-facing. Residues 511–528 (ISLFLILCNITLWMMPAF) traverse the membrane as a helical segment. The Extracellular segment spans residues 529-547 (GIHPEFENGLEKDFYGYRT). Residues 548–570 (WFTIVNFGLPLGVFYRMHSVGGL) traverse the membrane as a helical segment. Residues 571-577 (VEVYLGA) are Cytoplasmic-facing.

Belongs to the otopetrin family. As to quaternary structure, homodimer. In terms of tissue distribution, expressed in epidermis, small intestine, stomach and retina.

The protein resides in the cell membrane. The catalysed reaction is H(+)(in) = H(+)(out). Activated by extracellular acidification. Activated by Zn(2+) under non-acidic conditions. Functionally, proton-selective channel gated by extracellular protons. This Mus musculus (Mouse) protein is Proton channel OTOP3.